We begin with the raw amino-acid sequence, 338 residues long: Nucleoid-associated protein PM1885 (338 aa).

The protein belongs to the YejK family.

The protein resides in the cytoplasm. The protein localises to the nucleoid. This Pasteurella multocida (strain Pm70) protein is Nucleoid-associated protein PM1885.